We begin with the raw amino-acid sequence, 364 residues long: 4-hydroxythreonine-4-phosphate dehydrogenase (364 aa).

Substrate-binding residues include histidine 148 and threonine 149. Residues histidine 177, histidine 216, and histidine 301 each coordinate a divalent metal cation. Substrate is bound by residues lysine 309, asparagine 318, and arginine 327.

This sequence belongs to the PdxA family. In terms of assembly, homodimer. Requires Zn(2+) as cofactor. Mg(2+) is required as a cofactor. Co(2+) serves as cofactor.

The protein localises to the cytoplasm. The enzyme catalyses 4-(phosphooxy)-L-threonine + NAD(+) = 3-amino-2-oxopropyl phosphate + CO2 + NADH. Its pathway is cofactor biosynthesis; pyridoxine 5'-phosphate biosynthesis; pyridoxine 5'-phosphate from D-erythrose 4-phosphate: step 4/5. Its function is as follows. Catalyzes the NAD(P)-dependent oxidation of 4-(phosphooxy)-L-threonine (HTP) into 2-amino-3-oxo-4-(phosphooxy)butyric acid which spontaneously decarboxylates to form 3-amino-2-oxopropyl phosphate (AHAP). The sequence is that of 4-hydroxythreonine-4-phosphate dehydrogenase from Campylobacter jejuni subsp. jejuni serotype O:23/36 (strain 81-176).